Consider the following 192-residue polypeptide: MNFLLSWIHWGLAALLYFHNAKVLQAAPAQGDGDRQQGEVISFLTVYERSACRPVETMVDIFQEYPDEVEYIFKPSCVALMRCGGCCNDEALECVPTEVYNVTMEIMKLKPFQSQHIHPMSFQQHSKCECRPKKEVRIRQENHCEPCSERRKHLYKQDPLTCKCSCKFTDSRCKSKQLELNERTCRCEKPRR.

Positions 1–26 (MNFLLSWIHWGLAALLYFHNAKVLQA) are cleaved as a signal peptide. 3 disulfide bridges follow: cysteine 52/cysteine 94, cysteine 83/cysteine 128, and cysteine 87/cysteine 130. Asparagine 101 is a glycosylation site (N-linked (GlcNAc...) asparagine).

It belongs to the PDGF/VEGF growth factor family. In terms of assembly, homodimer; disulfide-linked. Also found as heterodimer with PGF Interacts with FLT1/VEGFR1 and KDR/VEGFR2 receptors, heparan sulfate and heparin. As to expression, expressed by the venom gland, and probably other tissues.

The protein resides in the secreted. Functionally, growth factor active in angiogenesis, vasculogenesis and endothelial cell growth. Induces endothelial cell proliferation, promotes cell migration, inhibits apoptosis and induces permeabilization of blood vessels. The sequence is that of Vascular endothelial growth factor A from Vipera ammodytes ammodytes (Western sand viper).